Here is a 308-residue protein sequence, read N- to C-terminus: uncharacterized protein (308 aa).

This is an uncharacterized protein from Treponema pallidum (strain Nichols).